A 152-amino-acid polypeptide reads, in one-letter code: MTTQTQYDLVPANGSEFELSVTQVPDEQHIRFWPQHFGTIPQWITLEPRIFAWMDRFCDEYCGGIWSFYTLSNGGAFMAPDADGDDKWHLLNGMNGNGAEMSAEAAGIAVCLIEYSHHACLTECDAMTEHYYRLRDYALQHPESSAIMRIID.

Belongs to the antirestriction protein family.

This is an uncharacterized protein from Escherichia coli (strain K12).